The following is a 133-amino-acid chain: Methylglyoxal synthase (133 aa).

One can recognise an MGS-like domain in the interval Met-1–Gly-133. Substrate-binding positions include His-12, Lys-16, Thr-38–Thr-41, and Ser-58–Gly-59. The active-site Proton donor/acceptor is the Asp-64. His-91 contributes to the substrate binding site.

Belongs to the methylglyoxal synthase family.

It catalyses the reaction dihydroxyacetone phosphate = methylglyoxal + phosphate. In terms of biological role, catalyzes the formation of methylglyoxal from dihydroxyacetone phosphate. This Cupriavidus taiwanensis (strain DSM 17343 / BCRC 17206 / CCUG 44338 / CIP 107171 / LMG 19424 / R1) (Ralstonia taiwanensis (strain LMG 19424)) protein is Methylglyoxal synthase.